Consider the following 321-residue polypeptide: Basic peroxidase (321 aa).

Residues 1 to 30 (MSYHKSSGTILMVPLFMLLISVNYFMSCNA) form the signal peptide. Gln-31 is subject to Pyrrolidone carboxylic acid. Disulfide bonds link Cys-41–Cys-117, Cys-74–Cys-79, Cys-123–Cys-317, and Cys-202–Cys-228. The active-site Proton acceptor is the His-72. Positions 73, 76, 78, 80, and 82 each coordinate Ca(2+). Residue Pro-165 coordinates substrate. Position 195 (His-195) interacts with heme b. Ca(2+) is bound at residue Thr-196. Residues Asn-211 and Asn-221 are each glycosylated (N-linked (GlcNAc...) asparagine). Positions 241, 244, and 249 each coordinate Ca(2+).

It belongs to the peroxidase family. Classical plant (class III) peroxidase subfamily. The cofactor is heme b. It depends on Ca(2+) as a cofactor. In terms of processing, N-glycosylated. Expressed in tracheary elements, roots, young and old hypocotyls, and stems in the partially glycosylated form and in roots and young hypocotyls in the fully glycosylated form. None of the isoforms is significantly expressed in leaves or cotyledons.

It is found in the secreted. It carries out the reaction 2 a phenolic donor + H2O2 = 2 a phenolic radical donor + 2 H2O. Removal of H(2)O(2), oxidation of toxic reductants, biosynthesis and degradation of lignin, suberization, auxin catabolism, response to environmental stresses such as wounding, pathogen attack and oxidative stress. These functions might be dependent on each isozyme/isoform in each plant tissue. Involved in the synthesis of highly polymerized lignins. This is Basic peroxidase (POD1) from Zinnia elegans (Garden zinnia).